Here is a 445-residue protein sequence, read N- to C-terminus: MLTSFKSSSSSSEDATATTTENPPPLCIASSSAATSASHHLRRLLFTAANFVSQSNFTAAQNLLSILSLNSSPHGDSTERLVHLFTKALSVRINRQQQDQTAETVATWTTNEMTMSNSTVFTSSVCKEQFLFRTKNNNSDFESCYYLWLNQLTPFIRFGHLTANQAILDATETNDNGALHILDLDISQGLQWPPLMQALAERSSNPSSPPPSLRITGCGRDVTGLNRTGDRLTRFADSLGLQFQFHTLVIVEEDLAGLLLQIRLLALSAVQGETIAVNCVHFLHKIFNDDGDMIGHFLSAIKSLNSRIVTMAEREANHGDHSFLNRFSEAVDHYMAIFDSLEATLPPNSRERLTLEQRWFGKEILDVVAAEETERKQRHRRFEIWEEMMKRFGFVNVPIGSFALSQAKLLLRLHYPSEGYNLQFLNNSLFLGWQNRPLFSVSSWK.

A compositionally biased stretch (low complexity) spans 1-21 (MLTSFKSSSSSSEDATATTTE). Residues 1-26 (MLTSFKSSSSSSEDATATTTENPPPL) are disordered. A GRAS domain is found at 32–445 (SAATSASHHL…RPLFSVSSWK (414 aa)). A leucine repeat I (LRI) region spans residues 39 to 127 (HHLRRLLFTA…STVFTSSVCK (89 aa)). Residues 146 to 217 (YLWLNQLTPF…SPPPSLRITG (72 aa)) are VHIID. Positions 179–183 (LHILD) match the VHIID motif. Positions 227–259 (RTGDRLTRFADSLGLQFQFHTLVIVEEDLAGLL) are leucine repeat II (LRII). The segment at 275–366 (IAVNCVHFLH…QRWFGKEILD (92 aa)) is PFYRE. The tract at residues 369 to 445 (AAEETERKQR…RPLFSVSSWK (77 aa)) is SAW.

Belongs to the GRAS family. In terms of tissue distribution, expressed in roots and flowers.

The protein resides in the nucleus. Its function is as follows. Probable transcription factor required for axillary (lateral) shoot meristem formation during vegetative development. Seems to act upstream of REVOLUTA. The chain is Scarecrow-like protein 18 (SCL18) from Arabidopsis thaliana (Mouse-ear cress).